We begin with the raw amino-acid sequence, 186 residues long: PRKR-interacting protein 1 (186 aa).

An interaction with EIF2AK2 region spans residues 1-50 (MASPAAASVRPPRPKKEPQTLVIPKNAAEEQKLKLERLMKNPDKAVPIPE). Residues 51–143 (KMNEWAPRAP…LKEKKLLAKK (93 aa)) form a required for RNA-binding region. Residues 91–178 (QRQDYMDAMA…ASETEEEEEE (88 aa)) are a coiled coil. Over residues 116-125 (NKIAAEEQTA) the composition is skewed to basic and acidic residues. The interval 116–186 (NKIAAEEQTA…EEPSVVIMGR (71 aa)) is disordered. The segment at 126 to 138 (KRRKKRQKLKEKK) is required for nuclear localization. Positions 126 to 143 (KRRKKRQKLKEKKLLAKK) are enriched in basic residues. The segment covering 144–155 (MKLEQKKQKEEP) has biased composition (basic and acidic residues). The segment covering 168–179 (EASETEEEEEEP) has biased composition (acidic residues).

This sequence belongs to the PRKRIP1 family. In terms of assembly, component of the pre-catalytic and post-catalytic spliceosome complexes. Interacts with EIF2AK2. Broadly expressed, with highest levels in liver, kidney, brain and heart.

The protein resides in the nucleus. The protein localises to the nucleolus. In terms of biological role, required for pre-mRNA splicing as component of the spliceosome. Binds double-stranded RNA. Inhibits EIF2AK2 kinase activity. The protein is PRKR-interacting protein 1 (Prkrip1) of Mus musculus (Mouse).